The chain runs to 983 residues: Inner tegument protein (983 aa).

Positions 474–983 (LNVNTHFAVQ…TSVSLPPASP (510 aa)) are interaction with large tegument protein. The interval 902 to 932 (PWESAPQPPRLRMTPDTDHEESTAGATSVPE) is disordered. The span at 914 to 923 (MTPDTDHEES) shows a compositional bias: basic and acidic residues.

Belongs to the herpesviridae inner tegument protein family. As to quaternary structure, interacts (via C-terminus) with the large tegument protein/LTP (via N-terminus).

The protein localises to the virion tegument. It is found in the host cytoplasm. Its subcellular location is the host nucleus. The protein resides in the host Golgi apparatus. It localises to the host trans-Golgi network. Functionally, plays an essential role in cytoplasmic secondary envelopment during viral egress. Interacts with the capsid via the large tegument protein/LTP and participates in its transport to the host trans-Golgi network (TGN) where secondary envelopment occurs. Modulates tegumentation and capsid accumulation at the viral assembly complex. The sequence is that of Inner tegument protein (UL47) from Homo sapiens (Human).